The chain runs to 526 residues: MPDSKYTMQGYNLVKLLKRLEEATARLEDVTIYQEGYIQNKLEASKNNKPSDSGADANTTNEPSAENAPEVEQDPKCITAFQSYIGENIDPLVELSGKIDTVVLDALQLLKGGFQSQLTFLRAAVRSRKPDYSSQTFADSLRPINENIIKLGQLKESNRQSKYFAYLSALSEGAPLFSWVAVDTPVSMVTDFKDAAQFWTNRILKEYRESDPNAVEWVKKFLASFDNLKAYIKEYHTTGVSWKKDGMDFADAMAQSTKNTGATSSPSPASATAAPAPPPPPPAPPASVFEISNDTPATSSDANKGGIGAVFAELNQGENITKGLKKVDKSQQTHKNPELRQSSTVSSTGSKSGPPPRPKKPSTLKTKRPPRKELVGNKWFIENYENETESLVIDANKDESIFIGKCSQVLVQIKGKVNAISLSETESCSVVLDSSISGMDVIKSNKFGIQVNHSLPQISIDKSDGGNIYLSKESLNTEIYTSCSTAINVNLPIGEDDDYVEFPIPEQMKHSFADGKFKSAVFEHAG.

The adenyl cyclase-binding stretch occupies residues 1 to 168 (MPDSKYTMQG…RQSKYFAYLS (168 aa)). 3 disordered regions span residues 43 to 72 (EASK…PEVE), 255 to 304 (QSTK…DANK), and 326 to 371 (KVDK…RPPR). Positions 45–64 (SKNNKPSDSGADANTTNEPS) are enriched in polar residues. Residues 169-369 (ALSEGAPLFS…KPSTLKTKRP (201 aa)) carry the SH3-binding motif. Positions 262–274 (ATSSPSPASATAA) are enriched in low complexity. The span at 275–285 (PAPPPPPPAPP) shows a compositional bias: pro residues. A compositionally biased stretch (polar residues) spans 290 to 302 (EISNDTPATSSDA). Residues 326 to 338 (KVDKSQQTHKNPE) are compositionally biased toward basic and acidic residues. Low complexity predominate over residues 342 to 352 (SSTVSSTGSKS). An interaction with SH3 domain of ABP1 region spans residues 354-361 (PPPRPKKP). The span at 357-370 (RPKKPSTLKTKRPP) shows a compositional bias: basic residues. One can recognise a C-CAP/cofactor C-like domain in the interval 369 to 504 (PPRKELVGNK…EDDDYVEFPI (136 aa)). The tract at residues 370–526 (PRKELVGNKW…FKSAVFEHAG (157 aa)) is dimerization and actin-binding. At Ser-454 the chain carries Phosphoserine.

It belongs to the CAP family. In terms of assembly, homodimer.

The protein localises to the cytoplasm. The protein resides in the cytoskeleton. Its subcellular location is the actin patch. In terms of biological role, the N-terminal domain binds to adenylyl cyclase, thereby enabling adenylyl cyclase to be activated by upstream regulatory signals, such as Ras. The C-terminal domain is required for normal cellular morphology and growth control. This Saccharomyces cerevisiae (strain ATCC 204508 / S288c) (Baker's yeast) protein is Adenylyl cyclase-associated protein (SRV2).